Reading from the N-terminus, the 160-residue chain is Archaemetzincin (160 aa).

Residue His-117 coordinates Zn(2+). Glu-118 acts as the Proton acceptor in catalysis. Residues His-121, His-127, Cys-128, Cys-132, Cys-151, and Cys-154 each coordinate Zn(2+).

It belongs to the peptidase M54 family. As to quaternary structure, monomer. It depends on Zn(2+) as a cofactor.

Its function is as follows. Probable zinc metalloprotease whose natural substrate is unknown. The chain is Archaemetzincin from Archaeoglobus fulgidus (strain ATCC 49558 / DSM 4304 / JCM 9628 / NBRC 100126 / VC-16).